Reading from the N-terminus, the 407-residue chain is Putative mannan endo-1,4-beta-mannosidase 9 (407 aa).

An N-terminal signal peptide occupies residues 1 to 31; that stretch reads MGSKRRVILLPTLGVVVLAIAAAVLLHAGEA. Residues tryptophan 95 and asparagine 208 each coordinate substrate. Glutamate 209 acts as the Proton donor in catalysis. Tyrosine 284 is a binding site for substrate. Glutamate 324 acts as the Nucleophile in catalysis. Tryptophan 366 contacts substrate.

Belongs to the glycosyl hydrolase 5 (cellulase A) family. As to expression, expression not detected.

Its subcellular location is the secreted. It carries out the reaction Random hydrolysis of (1-&gt;4)-beta-D-mannosidic linkages in mannans, galactomannans and glucomannans.. This Oryza sativa subsp. japonica (Rice) protein is Putative mannan endo-1,4-beta-mannosidase 9 (MAN9).